The following is a 421-amino-acid chain: Imidazolonepropionase (421 aa).

Residues H80 and H82 each coordinate Fe(3+). Zn(2+) contacts are provided by H80 and H82. R89, Y152, and H185 together coordinate 4-imidazolone-5-propanoate. Y152 contacts N-formimidoyl-L-glutamate. H249 provides a ligand contact to Fe(3+). Residue H249 coordinates Zn(2+). E252 contacts 4-imidazolone-5-propanoate. D324 lines the Fe(3+) pocket. D324 lines the Zn(2+) pocket. Residues N326 and G328 each coordinate N-formimidoyl-L-glutamate. S329 serves as a coordination point for 4-imidazolone-5-propanoate.

It belongs to the metallo-dependent hydrolases superfamily. HutI family. The cofactor is Zn(2+). It depends on Fe(3+) as a cofactor.

It is found in the cytoplasm. The enzyme catalyses 4-imidazolone-5-propanoate + H2O = N-formimidoyl-L-glutamate. Its pathway is amino-acid degradation; L-histidine degradation into L-glutamate; N-formimidoyl-L-glutamate from L-histidine: step 3/3. In terms of biological role, catalyzes the hydrolytic cleavage of the carbon-nitrogen bond in imidazolone-5-propanoate to yield N-formimidoyl-L-glutamate. It is the third step in the universal histidine degradation pathway. This Bacillus velezensis (strain DSM 23117 / BGSC 10A6 / LMG 26770 / FZB42) (Bacillus amyloliquefaciens subsp. plantarum) protein is Imidazolonepropionase.